A 548-amino-acid polypeptide reads, in one-letter code: Chaperonin GroEL (548 aa).

ATP contacts are provided by residues 30 to 33 (TLGP), lysine 51, 87 to 91 (DGTTT), glycine 415, 479 to 481 (NAA), and aspartate 495. The segment at 526–548 (REDKSSDVASSPAGGMGGMGGMM) is disordered. Over residues 539-548 (GGMGGMGGMM) the composition is skewed to gly residues.

This sequence belongs to the chaperonin (HSP60) family. As to quaternary structure, forms a cylinder of 14 subunits composed of two heptameric rings stacked back-to-back. Interacts with the co-chaperonin GroES.

The protein localises to the cytoplasm. It catalyses the reaction ATP + H2O + a folded polypeptide = ADP + phosphate + an unfolded polypeptide.. Functionally, together with its co-chaperonin GroES, plays an essential role in assisting protein folding. The GroEL-GroES system forms a nano-cage that allows encapsulation of the non-native substrate proteins and provides a physical environment optimized to promote and accelerate protein folding. This chain is Chaperonin GroEL, found in Buchnera aphidicola subsp. Schizaphis graminum (strain Sg).